The primary structure comprises 434 residues: UPF0597 protein CLD_2616 (434 aa).

It belongs to the UPF0597 family.

The chain is UPF0597 protein CLD_2616 from Clostridium botulinum (strain Okra / Type B1).